Here is a 49-residue protein sequence, read N- to C-terminus: Large ribosomal subunit protein bL33B (49 aa).

It belongs to the bacterial ribosomal protein bL33 family.

The chain is Large ribosomal subunit protein bL33B from Geobacillus thermodenitrificans (strain NG80-2).